Consider the following 220-residue polypeptide: Superoxide dismutase [Fe] (220 aa).

Fe cation contacts are provided by histidine 26, histidine 73, aspartate 164, and histidine 168.

This sequence belongs to the iron/manganese superoxide dismutase family. In terms of assembly, homodimer. Fe cation serves as cofactor.

It carries out the reaction 2 superoxide + 2 H(+) = H2O2 + O2. Functionally, destroys superoxide anion radicals which are normally produced within the cells and which are toxic to biological systems. The sequence is that of Superoxide dismutase [Fe] (sodB) from Campylobacter jejuni subsp. jejuni serotype O:2 (strain ATCC 700819 / NCTC 11168).